The sequence spans 184 residues: Ribosome maturation factor RimP (184 aa).

It belongs to the RimP family.

It localises to the cytoplasm. Its function is as follows. Required for maturation of 30S ribosomal subunits. The polypeptide is Ribosome maturation factor RimP (Zymomonas mobilis subsp. mobilis (strain ATCC 31821 / ZM4 / CP4)).